Reading from the N-terminus, the 1546-residue chain is Lysophospholipase NTE1 (1546 aa).

Residues 1–45 (MKDSTEALNSIAFAVDTTLSSILPSSLAPPSAPPATSSFLKSIWY) lie on the Cytoplasmic side of the membrane. The chain crosses the membrane as a helical span at residues 46-66 (AFWWLWSMVVFKIMNIILLYI). Over 67–81 (PSKIMNALSINFEIT) the chain is Lumenal. A helical transmembrane segment spans residues 82 to 102 (LNLSSILVALSAIITVCFLVV). Residues 103–1546 (RYKYLTGYSK…KKVLYRRNSI (1444 aa)) are Cytoplasmic-facing. A nucleoside 3',5'-cyclic phosphate is bound by residues 689-820 (PTEF…LKKL) and 816-965 (KLKK…VASK). A PNPLA domain is found at 1239 to 1403 (LVLGGGGSRG…LDNLPVSEMK (165 aa)). The GXGXXG motif lies at 1243–1248 (GGGSRG). The GXSXG motif lies at 1270-1274 (GTSIG). The active-site Nucleophile is Ser-1272. Catalysis depends on Asp-1390, which acts as the Proton acceptor. The DGA/G motif lies at 1390 to 1392 (DGG).

The protein belongs to the NTE family.

It localises to the endoplasmic reticulum membrane. It carries out the reaction a 1-acyl-sn-glycero-3-phosphocholine + H2O = sn-glycerol 3-phosphocholine + a fatty acid + H(+). Its activity is regulated as follows. Inhibited by organophosphorus esters. In terms of biological role, intracellular phospholipase B that catalyzes the double deacylation of phosphatidylcholine (PC) to glycerophosphocholine (GroPCho). Plays an important role in membrane lipid homeostasis. Responsible for the rapid PC turnover in response to inositol, elevated temperatures, or when choline is present in the growth medium. This Scheffersomyces stipitis (strain ATCC 58785 / CBS 6054 / NBRC 10063 / NRRL Y-11545) (Yeast) protein is Lysophospholipase NTE1 (NTE1).